The following is a 174-amino-acid chain: MAKDPTFEEVTGCQRALFEWADSYDTKDWERLKKCVAPTLRIDYRSFLDKLWEAMPSDEFILMASDPRFLGNPLLKTQHFVGLSTWQKISPDEIEGTHQLRVPHQRYTDSNMKEVAVKGHAHGIATMWYKRVEDEWKFAGVCPQIRWAEFDYDKVFAEGKDHFGENGGNGEHAV.

Tyr-24, Tyr-44, and Phe-47 together coordinate substrate. Active-site residues include His-79 and His-104.

This sequence belongs to the scytalone dehydratase family. In terms of assembly, homotrimer. Each subunit contains an active site, located in the central part of the hydrophobic core of the monomer, which functions independently.

It functions in the pathway secondary metabolite biosynthesis. Dehydratase; part of the gene cluster that mediates the biosynthesis of agnestins, dihydroxy-xanthone metabolites. The pathway begins with the assembly and cyclization of atrochrysone thioester by the non-reducing polyketide synthase Agnpks1. The atrochrysone carboxyl ACP thioesterase AgnL7 then breaks the thioester bond and releases the atrochrysone carboxylic acid as the first enzyme-free intermediate. The decarboxylase AgnL1 then catalyzes the concerted decarboxylation-elimination required to convert atochrysone carboxylic acid into emodin anthrone, which is further oxidized to emodin by the anthrone oxygenase AgnL2. Emodin then undergoes reduction catalyzed by the oxidoreductase AgnL4 to yield the dihydroquinone tautomer which is the substrate for reduction by the short chain dehydrogenase AgnL6 reduction to produce hydroxyketone, followed by AgnL8 dehydration and likely spontaneous autoxidation to chrysophanol. Baeyer-Villiger oxidation by the oxidase AgnL3 leads to monodictyphenone via cleavage of the C-10/C-10a bond of chrysophanol. Alternative cleavage at the C-4a/C-10 bond of chrysophanol also leads to the formation some cephalone F. Further conversion to agnestins A and B, requires reduction to dihydro-monodictyphenone, oxidation to agnestin C probably via an epoxide, and rearrangement to either agnestin A or agnestin B directly, although agnestin A or agnestin B can also interconvert. Within the cluster, AgnR1 is the only unassigned oxidoreductase present which could be involved in this conversion. However, AgnR1 seems not to be involved in this step, and thus genes involved in the proposed oxidation/reduction may be located elsewhere on the genome. Further agnestin A derivatives are probably formed by spontaneous decarboxylations, dehydrations and methanolysis reactions. The sequence is that of Dehydratase AgnL8 from Paecilomyces divaricatus (Penicillium divaricatum).